The chain runs to 562 residues: Cytochrome c oxidase subunit 1 (562 aa).

The helical transmembrane segment at 21-41 threads the bilayer; that stretch reads TLYFLVLGFLALIVGSLFGPF. His72 is a Fe(II)-heme a binding site. 8 helical membrane-spanning segments follow: residues 74–94, 105–125, 144–164, 187–207, 227–247, 267–287, 300–320, and 345–365; these read VLNA…YLPA, LMWL…LPLL, AFYL…YIVL, VVFW…AVLF, LFWW…YAII, LAFL…QFAD, VLTL…AASL, and AFVA…GGIV. His233, Tyr237, His282, and His283 together coordinate Cu cation. A cross-link (1'-histidyl-3'-tyrosine (His-Tyr)) is located at residues 233–237; it reads HPIVY. Position 384 (His384) interacts with heme a3. 4 consecutive transmembrane segments (helical) span residues 385 to 405, 420 to 440, 471 to 491, and 527 to 547; these read FHLQ…YWLL, LGLA…VGLH, VLAG…LFSV, and IGFW…PTLV. His386 is a binding site for Fe(II)-heme a.

The protein belongs to the heme-copper respiratory oxidase family. It depends on heme as a cofactor. The cofactor is Cu cation.

It is found in the cell membrane. The catalysed reaction is 4 Fe(II)-[cytochrome c] + O2 + 8 H(+)(in) = 4 Fe(III)-[cytochrome c] + 2 H2O + 4 H(+)(out). It functions in the pathway energy metabolism; oxidative phosphorylation. The polypeptide is Cytochrome c oxidase subunit 1 (cbaA) (Thermus thermophilus (strain ATCC 27634 / DSM 579 / HB8)).